A 504-amino-acid polypeptide reads, in one-letter code: UDP-N-acetylmuramoylalanine--D-glutamate ligase (504 aa).

132–138 serves as a coordination point for ATP; that stretch reads GTNGKTT. Residues 286-295 show a composition bias toward basic and acidic residues; sequence DRDASDEPAP. The segment at 286–305 is disordered; the sequence is DRDASDEPAPKRRRKNEVAT.

The protein belongs to the MurCDEF family.

It is found in the cytoplasm. It carries out the reaction UDP-N-acetyl-alpha-D-muramoyl-L-alanine + D-glutamate + ATP = UDP-N-acetyl-alpha-D-muramoyl-L-alanyl-D-glutamate + ADP + phosphate + H(+). It participates in cell wall biogenesis; peptidoglycan biosynthesis. In terms of biological role, cell wall formation. Catalyzes the addition of glutamate to the nucleotide precursor UDP-N-acetylmuramoyl-L-alanine (UMA). This chain is UDP-N-acetylmuramoylalanine--D-glutamate ligase, found in Paraburkholderia xenovorans (strain LB400).